The sequence spans 276 residues: 2-dehydro-3-deoxyphosphooctonate aldolase (276 aa).

The protein belongs to the KdsA family.

The protein localises to the cytoplasm. The catalysed reaction is D-arabinose 5-phosphate + phosphoenolpyruvate + H2O = 3-deoxy-alpha-D-manno-2-octulosonate-8-phosphate + phosphate. It functions in the pathway carbohydrate biosynthesis; 3-deoxy-D-manno-octulosonate biosynthesis; 3-deoxy-D-manno-octulosonate from D-ribulose 5-phosphate: step 2/3. The protein operates within bacterial outer membrane biogenesis; lipopolysaccharide biosynthesis. The protein is 2-dehydro-3-deoxyphosphooctonate aldolase of Helicobacter acinonychis (strain Sheeba).